A 341-amino-acid polypeptide reads, in one-letter code: GTP 3',8-cyclase (341 aa).

A Radical SAM core domain is found at 11–231; the sequence is KRNRPLRDLR…DLINKHMPVE (221 aa). GTP is bound at residue Arg-20. [4Fe-4S] cluster contacts are provided by Cys-27 and Cys-31. Tyr-33 contributes to the S-adenosyl-L-methionine binding site. A [4Fe-4S] cluster-binding site is contributed by Cys-34. Arg-75 contacts GTP. Gly-79 contacts S-adenosyl-L-methionine. Thr-106 contacts GTP. Position 130 (Ser-130) interacts with S-adenosyl-L-methionine. A GTP-binding site is contributed by Lys-167. S-adenosyl-L-methionine is bound at residue Met-201. [4Fe-4S] cluster is bound by residues Cys-265 and Cys-268. Position 270–272 (270–272) interacts with GTP; it reads RAR. Cys-282 is a [4Fe-4S] cluster binding site.

It belongs to the radical SAM superfamily. MoaA family. Monomer and homodimer. Requires [4Fe-4S] cluster as cofactor.

The enzyme catalyses GTP + AH2 + S-adenosyl-L-methionine = (8S)-3',8-cyclo-7,8-dihydroguanosine 5'-triphosphate + 5'-deoxyadenosine + L-methionine + A + H(+). It functions in the pathway cofactor biosynthesis; molybdopterin biosynthesis. Functionally, catalyzes the cyclization of GTP to (8S)-3',8-cyclo-7,8-dihydroguanosine 5'-triphosphate. Required for both nitrate assimilation and respiration. The chain is GTP 3',8-cyclase from Bacillus subtilis (strain 168).